The chain runs to 315 residues: MARIAYLGPEGTFTEAALRQITAAGLVPGQGADGVRPTPVDGTPAALDAVRDGAADYACVPIENSIDGSVTPTLDSLAIGSPLQVFAETTLDVAFSIVVKPGLSAADVRTLAAIGVAAAQVRQWVAANLAGAQLRPAYSNADAAQQVAEGRADAAVTSPLAAARWGLDTLADGVVDEPNARTRFVLVGPPAPPPARTGADRTSVVLRIDNAPGALLAALAEFGIRGIDLTRIESRPTRTGLGIYRFFADCVGHIDDEPVAEALKALHRRCADVRYLGSWPTGTPAGALPPSTEEAVRWLAAVRDGKPEPPGESRR.

Residues 3–189 (RIAYLGPEGT…ARTRFVLVGP (187 aa)) enclose the Prephenate dehydratase domain. The 78-residue stretch at 203–280 (SVVLRIDNAP…ADVRYLGSWP (78 aa)) folds into the ACT domain.

Homodimer.

The enzyme catalyses prephenate + H(+) = 3-phenylpyruvate + CO2 + H2O. The protein operates within amino-acid biosynthesis; L-phenylalanine biosynthesis; phenylpyruvate from prephenate: step 1/1. The polypeptide is Prephenate dehydratase (pheA) (Mycobacterium avium (strain 104)).